The chain runs to 732 residues: uncharacterized protein (732 aa).

The interval E145–H207 is disordered. A compositionally biased stretch (basic and acidic residues) spans K170 to S179. One can recognise a Reverse transcriptase domain in the interval E176–I524.

The protein resides in the mitochondrion. This is an uncharacterized protein from Marchantia polymorpha (Common liverwort).